Reading from the N-terminus, the 68-residue chain is Protein RH1 (68 aa).

This is Protein RH1 from Pantherophis guttatus (Corn snake).